Consider the following 222-residue polypeptide: Probable nicotinate-nucleotide adenylyltransferase (222 aa).

The protein belongs to the NadD family.

The enzyme catalyses nicotinate beta-D-ribonucleotide + ATP + H(+) = deamido-NAD(+) + diphosphate. Its pathway is cofactor biosynthesis; NAD(+) biosynthesis; deamido-NAD(+) from nicotinate D-ribonucleotide: step 1/1. Its function is as follows. Catalyzes the reversible adenylation of nicotinate mononucleotide (NaMN) to nicotinic acid adenine dinucleotide (NaAD). This is Probable nicotinate-nucleotide adenylyltransferase from Xylella fastidiosa (strain M12).